Here is a 148-residue protein sequence, read N- to C-terminus: UPF0179 protein Mevan_0979 (148 aa).

It belongs to the UPF0179 family.

In Methanococcus vannielii (strain ATCC 35089 / DSM 1224 / JCM 13029 / OCM 148 / SB), this protein is UPF0179 protein Mevan_0979.